A 127-amino-acid chain; its full sequence is Secreted RxLR effector protein 7 (127 aa).

The first 21 residues, 1-21 (MRSAYYVLTALLVVASSQVAA), serve as a signal peptide directing secretion. The RxLR-dEER signature appears at 48 to 65 (RFLRESRDVHGNVANEER).

It belongs to the RxLR effector family.

Its subcellular location is the secreted. It localises to the host nucleus. It is found in the host cytoplasm. Secreted effector that completely suppresses the host cell death induced by cell death-inducing proteins. The chain is Secreted RxLR effector protein 7 from Plasmopara viticola (Downy mildew of grapevine).